We begin with the raw amino-acid sequence, 379 residues long: Cobalt-precorrin-5B C(1)-methyltransferase (379 aa).

Belongs to the CbiD family.

It carries out the reaction Co-precorrin-5B + S-adenosyl-L-methionine = Co-precorrin-6A + S-adenosyl-L-homocysteine. The protein operates within cofactor biosynthesis; adenosylcobalamin biosynthesis; cob(II)yrinate a,c-diamide from sirohydrochlorin (anaerobic route): step 6/10. Catalyzes the methylation of C-1 in cobalt-precorrin-5B to form cobalt-precorrin-6A. The polypeptide is Cobalt-precorrin-5B C(1)-methyltransferase (Klebsiella pneumoniae subsp. pneumoniae (strain ATCC 700721 / MGH 78578)).